We begin with the raw amino-acid sequence, 264 residues long: 1-(5-phosphoribosyl)-5-[(5-phosphoribosylamino)methylideneamino] imidazole-4-carboxamide isomerase (264 aa).

It belongs to the HisA/HisF family.

Its subcellular location is the cytoplasm. It carries out the reaction 1-(5-phospho-beta-D-ribosyl)-5-[(5-phospho-beta-D-ribosylamino)methylideneamino]imidazole-4-carboxamide = 5-[(5-phospho-1-deoxy-D-ribulos-1-ylimino)methylamino]-1-(5-phospho-beta-D-ribosyl)imidazole-4-carboxamide. It functions in the pathway amino-acid biosynthesis; L-histidine biosynthesis; L-histidine from 5-phospho-alpha-D-ribose 1-diphosphate: step 4/9. The sequence is that of 1-(5-phosphoribosyl)-5-[(5-phosphoribosylamino)methylideneamino] imidazole-4-carboxamide isomerase (HIS6) from Yarrowia lipolytica (strain CLIB 122 / E 150) (Yeast).